A 422-amino-acid polypeptide reads, in one-letter code: Replication factor C large subunit (422 aa).

63–70 is an ATP binding site; sequence GPPGVGKT.

This sequence belongs to the activator 1 small subunits family. RfcL subfamily. In terms of assembly, heteromultimer composed of small subunits (RfcS) and large subunits (RfcL).

Functionally, part of the RFC clamp loader complex which loads the PCNA sliding clamp onto DNA. In Pyrobaculum arsenaticum (strain DSM 13514 / JCM 11321 / PZ6), this protein is Replication factor C large subunit.